Here is a 506-residue protein sequence, read N- to C-terminus: Tyrosine-protein kinase isoform SRK4 (506 aa).

Composition is skewed to polar residues over residues 1–10 (MGSCCSSQDG) and 18–31 (AGSTVDSHELSQSV). Residues 1-53 (MGSCCSSQDGDGNGKATAGSTVDSHELSQSVKGKIKQPEPKPKPPPQVPPAQD) are disordered. The SH3 domain occupies 54-116 (VKYPIYVGKY…PSNYVAEYKS (63 aa)). An SH2 domain is found at 122–214 (WFFGQVKRVD…GLCVNLKGPC (93 aa)). One can recognise a Protein kinase domain in the interval 240-493 (IKLLRGLGAG…TLSWQLEEFF (254 aa)). Residues 246 to 254 (LGAGQFGEV) and Lys-268 contribute to the ATP site. Asp-359 (proton acceptor) is an active-site residue.

The protein belongs to the protein kinase superfamily. Tyr protein kinase family.

It localises to the cytoplasm. The enzyme catalyses L-tyrosyl-[protein] + ATP = O-phospho-L-tyrosyl-[protein] + ADP + H(+). The polypeptide is Tyrosine-protein kinase isoform SRK4 (SRK1) (Spongilla lacustris (Freshwater sponge)).